A 529-amino-acid chain; its full sequence is G-protein coupled receptor 161 (529 aa).

Over 1–30 the chain is Extracellular; the sequence is MSLNSSLSCRKELSNLTEEEGGEGGVIITQ. 2 N-linked (GlcNAc...) asparagine glycosylation sites follow: N4 and N15. Residues 31-51 form a helical membrane-spanning segment; it reads FIAIIVITIFVCLGNLVIVVT. At 52–64 the chain is on the cytoplasmic side; the sequence is LYKKSYLLTLSNK. Residues 65–85 form a helical membrane-spanning segment; that stretch reads FVFSLTLSNFLLSVLVLPFVV. At 86–101 the chain is on the extracellular side; it reads TSSIRREWIFGVVWCN. C100 and C178 are disulfide-bonded. The chain crosses the membrane as a helical span at residues 102–123; sequence FSALLYLLISSASMLTLGVIAI. Residues 124–143 lie on the Cytoplasmic side of the membrane; that stretch reads DRYYAVLYPMVYPMKITGNR. Residues 144–164 traverse the membrane as a helical segment; the sequence is AVMALVYIWLHSLIGCLPPLF. Residues 165–190 lie on the Extracellular side of the membrane; that stretch reads GWSSVEFDEFKWMCVAAWHREPGYTA. A helical membrane pass occupies residues 191-211; that stretch reads FWQIWCALFPFLVMLVCYGFI. Over 212–269 the chain is Cytoplasmic; that stretch reads FRVARVKARKVHCGTVVIVEEDAQRTGRKNSSTSTSSSGSRRNAFQGVVYSANQCKAL. A helical membrane pass occupies residues 270–290; it reads ITILVVLGAFMVTWGPYMVVI. Residues 291–306 are Extracellular-facing; it reads ASEALWGKSSVSPSLE. A helical transmembrane segment spans residues 307 to 327; that stretch reads TWATWLSFASAVCHPLIYGLW. The Cytoplasmic segment spans residues 328–529; it reads NKTVRKELLG…EGDVLAAEQR (202 aa).

This sequence belongs to the G-protein coupled receptor 1 family.

It localises to the cell projection. The protein resides in the cilium membrane. Its subcellular location is the cell membrane. In terms of biological role, key negative regulator of Shh signaling, which promotes the processing of GLI3 into GLI3R during neural tube development. Recruited by TULP3 and the IFT-A complex to primary cilia and acts as a regulator of the PKA-dependent basal repression machinery in Shh signaling by increasing cAMP levels, leading to promote the PKA-dependent processing of GLI3 into GLI3R and repress the Shh signaling. In presence of SHH, it is removed from primary cilia and is internalized into recycling endosomes, preventing its activity and allowing activation of the Shh signaling. Its ligand is unknown. The polypeptide is G-protein coupled receptor 161 (GPR161) (Homo sapiens (Human)).